Here is a 460-residue protein sequence, read N- to C-terminus: NADH-ubiquinone oxidoreductase chain 4 (460 aa).

13 helical membrane passes run 20–42 (AKWL…LSWL), 61–81 (PLST…ILAS), 94–113 (RAYI…AFGA), 117–139 (IMFY…RWGN), 148–168 (TYFL…LLLM), 195–215 (LWWA…GVHL), 225–245 (PIAG…YGMM), 258–278 (LAYP…SICL), 285–304 (SLIA…GILI), 308–330 (WGFT…LFCL), 351–371 (MILP…LALP), 394–414 (LILT…LFLM), and 436–456 (LLII…ELMW).

This sequence belongs to the complex I subunit 4 family.

The protein localises to the mitochondrion membrane. It carries out the reaction a ubiquinone + NADH + 5 H(+)(in) = a ubiquinol + NAD(+) + 4 H(+)(out). Core subunit of the mitochondrial membrane respiratory chain NADH dehydrogenase (Complex I) that is believed to belong to the minimal assembly required for catalysis. Complex I functions in the transfer of electrons from NADH to the respiratory chain. The immediate electron acceptor for the enzyme is believed to be ubiquinone. This chain is NADH-ubiquinone oxidoreductase chain 4 (MT-ND4), found in Oncorhynchus mykiss (Rainbow trout).